We begin with the raw amino-acid sequence, 36 residues long: MENSNLFSFFVPLVGLVFSAIIMVLSFLYIQKDSVN.

Residues 10–30 (FVPLVGLVFSAIIMVLSFLYI) form a helical membrane-spanning segment.

It belongs to the PsaI family.

The protein localises to the plastid. It localises to the chloroplast thylakoid membrane. Its function is as follows. May help in the organization of the PsaL subunit. The protein is Photosystem I reaction center subunit VIII of Welwitschia mirabilis (Tree tumbo).